Here is a 779-residue protein sequence, read N- to C-terminus: Mediator of RNA polymerase II transcription subunit 15 (779 aa).

Composition is skewed to polar residues over residues 70–90 and 98–108; these read NKNQQNPAGGSQDGGNPNQQG and ALQTLATQGTR. Disordered stretches follow at residues 70-131, 209-407, 437-512, and 629-649; these read NKNQ…GGNA, NPMQ…VPIG, FLRQ…NPQE, and PAKQPRLAIDEPSTSGSTGSQ. The segment covering 114 to 130 has biased composition (gly residues); that stretch reads GQMGPGGPMGNQMGGGN. 2 stretches are compositionally biased toward low complexity: residues 209-232 and 240-270; these read NPMQMGVSGMPQGAGQQQPQQPQG and PNQMNPMGGMGMQVNPGGHMNQNAINQQMNQ. Over residues 274–284 the composition is skewed to gly residues; that stretch reads SSGGNQMGNLG. Composition is skewed to low complexity over residues 285-295, 304-329, and 339-350; these read GNSPMNPGNMG, QQMPPGMNPNQQQLGMAGGQMNQMNQ, and GPVQQQQQPGQV. Positions 351–361 are enriched in gly residues; that stretch reads GMAGMGPGGPG. 3 stretches are compositionally biased toward low complexity: residues 362-383, 393-402, and 451-468; these read NLQQQNNPQQQSQGGPNAAPGQ, NMQAMGNQGN, and GPGSIGPQSHPGQMIPSP. 2 stretches are compositionally biased toward polar residues: residues 477–500 and 640–649; these read QVSSNIPAPRNIGQSPGQSLNTPG and PSTSGSTGSQ.

This sequence belongs to the Mediator complex subunit 15 family. Component of the Mediator complex.

Its subcellular location is the nucleus. Functionally, component of the Mediator complex, a coactivator involved in the regulated transcription of nearly all RNA polymerase II-dependent genes. Mediator functions as a bridge to convey information from gene-specific regulatory proteins to the basal RNA polymerase II transcription machinery. Mediator is recruited to promoters by direct interactions with regulatory proteins and serves as a scaffold for the assembly of a functional preinitiation complex with RNA polymerase II and the general transcription factors. The protein is Mediator of RNA polymerase II transcription subunit 15 (MED15) of Aedes aegypti (Yellowfever mosquito).